The following is a 225-amino-acid chain: Small ribosomal subunit protein uS7 (225 aa).

This sequence belongs to the universal ribosomal protein uS7 family. As to quaternary structure, component of the small ribosomal subunit. Mature ribosomes consist of a small (40S) and a large (60S) subunit. The 40S subunit contains about 32 different proteins and 1 molecule of RNA (18S). The 60S subunit contains 45 different proteins and 3 molecules of RNA (25S, 5.8S and 5S).

The protein resides in the cytoplasm. Its function is as follows. Component of the ribosome, a large ribonucleoprotein complex responsible for the synthesis of proteins in the cell. The small ribosomal subunit (SSU) binds messenger RNAs (mRNAs) and translates the encoded message by selecting cognate aminoacyl-transfer RNA (tRNA) molecules. The large subunit (LSU) contains the ribosomal catalytic site termed the peptidyl transferase center (PTC), which catalyzes the formation of peptide bonds, thereby polymerizing the amino acids delivered by tRNAs into a polypeptide chain. The nascent polypeptides leave the ribosome through a tunnel in the LSU and interact with protein factors that function in enzymatic processing, targeting, and the membrane insertion of nascent chains at the exit of the ribosomal tunnel. This Candida albicans (strain SC5314 / ATCC MYA-2876) (Yeast) protein is Small ribosomal subunit protein uS7 (RPS5).